The primary structure comprises 449 residues: Bifunctional protein GlmU (449 aa).

The segment at 1–229 (MNHFAVILAA…FEETIGVNDR (229 aa)) is pyrophosphorylase. UDP-N-acetyl-alpha-D-glucosamine-binding positions include 8–11 (LAAG), Lys22, Gln72, and 77–78 (GT). Asp102 contributes to the Mg(2+) binding site. Positions 139, 154, 169, and 227 each coordinate UDP-N-acetyl-alpha-D-glucosamine. Residue Asn227 coordinates Mg(2+). Residues 230–250 (VALAQAETSMRKRTNEHWMRQ) are linker. Residues 251–449 (GVTFIDPAST…ERQTTKPDYR (199 aa)) form an N-acetyltransferase region. Residues Arg332 and Lys350 each coordinate UDP-N-acetyl-alpha-D-glucosamine. Residue His362 is the Proton acceptor of the active site. 2 residues coordinate UDP-N-acetyl-alpha-D-glucosamine: Tyr365 and Asn376. Acetyl-CoA contacts are provided by residues 385–386 (NY), Ala422, and Arg439.

In the N-terminal section; belongs to the N-acetylglucosamine-1-phosphate uridyltransferase family. This sequence in the C-terminal section; belongs to the transferase hexapeptide repeat family. Homotrimer. Mg(2+) serves as cofactor.

The protein localises to the cytoplasm. It catalyses the reaction alpha-D-glucosamine 1-phosphate + acetyl-CoA = N-acetyl-alpha-D-glucosamine 1-phosphate + CoA + H(+). The catalysed reaction is N-acetyl-alpha-D-glucosamine 1-phosphate + UTP + H(+) = UDP-N-acetyl-alpha-D-glucosamine + diphosphate. The protein operates within nucleotide-sugar biosynthesis; UDP-N-acetyl-alpha-D-glucosamine biosynthesis; N-acetyl-alpha-D-glucosamine 1-phosphate from alpha-D-glucosamine 6-phosphate (route II): step 2/2. It functions in the pathway nucleotide-sugar biosynthesis; UDP-N-acetyl-alpha-D-glucosamine biosynthesis; UDP-N-acetyl-alpha-D-glucosamine from N-acetyl-alpha-D-glucosamine 1-phosphate: step 1/1. Its pathway is bacterial outer membrane biogenesis; LPS lipid A biosynthesis. Catalyzes the last two sequential reactions in the de novo biosynthetic pathway for UDP-N-acetylglucosamine (UDP-GlcNAc). The C-terminal domain catalyzes the transfer of acetyl group from acetyl coenzyme A to glucosamine-1-phosphate (GlcN-1-P) to produce N-acetylglucosamine-1-phosphate (GlcNAc-1-P), which is converted into UDP-GlcNAc by the transfer of uridine 5-monophosphate (from uridine 5-triphosphate), a reaction catalyzed by the N-terminal domain. The protein is Bifunctional protein GlmU of Exiguobacterium sibiricum (strain DSM 17290 / CCUG 55495 / CIP 109462 / JCM 13490 / 255-15).